The sequence spans 476 residues: NADH-quinone oxidoreductase subunit N (476 aa).

13 consecutive transmembrane segments (helical) span residues Leu-7–Val-27, Arg-33–Met-53, Val-59–Val-79, Gly-100–Gly-120, Leu-122–Phe-142, Tyr-156–Gly-176, Leu-199–Phe-219, Phe-237–Ala-257, Trp-265–Ile-285, Leu-305–Met-325, Val-363–Phe-383, Ile-399–Val-419, and Val-437–Ile-457.

Belongs to the complex I subunit 2 family. In terms of assembly, NDH-1 is composed of 14 different subunits. Subunits NuoA, H, J, K, L, M, N constitute the membrane sector of the complex.

It is found in the cell membrane. The catalysed reaction is a quinone + NADH + 5 H(+)(in) = a quinol + NAD(+) + 4 H(+)(out). Its function is as follows. NDH-1 shuttles electrons from NADH, via FMN and iron-sulfur (Fe-S) centers, to quinones in the respiratory chain. The immediate electron acceptor for the enzyme in this species is believed to be a menaquinone. Couples the redox reaction to proton translocation (for every two electrons transferred, four hydrogen ions are translocated across the cytoplasmic membrane), and thus conserves the redox energy in a proton gradient. The polypeptide is NADH-quinone oxidoreductase subunit N (Moorella thermoacetica (strain ATCC 39073 / JCM 9320)).